We begin with the raw amino-acid sequence, 126 residues long: Large ribosomal subunit protein bL19 (126 aa).

Belongs to the bacterial ribosomal protein bL19 family.

This protein is located at the 30S-50S ribosomal subunit interface and may play a role in the structure and function of the aminoacyl-tRNA binding site. This chain is Large ribosomal subunit protein bL19, found in Thiobacillus denitrificans (strain ATCC 25259 / T1).